The primary structure comprises 339 residues: Ferrochelatase (339 aa).

Residues histidine 202 and glutamate 283 each contribute to the Fe cation site.

The protein belongs to the ferrochelatase family.

It localises to the cytoplasm. The enzyme catalyses heme b + 2 H(+) = protoporphyrin IX + Fe(2+). It participates in porphyrin-containing compound metabolism; protoheme biosynthesis; protoheme from protoporphyrin-IX: step 1/1. Catalyzes the ferrous insertion into protoporphyrin IX. The sequence is that of Ferrochelatase from Psychrobacter cryohalolentis (strain ATCC BAA-1226 / DSM 17306 / VKM B-2378 / K5).